A 676-amino-acid polypeptide reads, in one-letter code: DNA ligase (676 aa).

Residues 41–45 (DLTYD), 90–91 (SL), and glutamate 123 each bind NAD(+). The active-site N6-AMP-lysine intermediate is lysine 125. Positions 146, 180, 293, and 317 each coordinate NAD(+). The Zn(2+) site is built by cysteine 408, cysteine 411, cysteine 424, and cysteine 429.

It belongs to the NAD-dependent DNA ligase family. LigA subfamily. Mg(2+) is required as a cofactor. The cofactor is Mn(2+).

The enzyme catalyses NAD(+) + (deoxyribonucleotide)n-3'-hydroxyl + 5'-phospho-(deoxyribonucleotide)m = (deoxyribonucleotide)n+m + AMP + beta-nicotinamide D-nucleotide.. Functionally, DNA ligase that catalyzes the formation of phosphodiester linkages between 5'-phosphoryl and 3'-hydroxyl groups in double-stranded DNA using NAD as a coenzyme and as the energy source for the reaction. It is essential for DNA replication and repair of damaged DNA. The chain is DNA ligase from Borrelia turicatae (strain 91E135).